We begin with the raw amino-acid sequence, 582 residues long: uncharacterized protein (582 aa).

12 helical membrane-spanning segments follow: residues 29 to 49 (LFIV…FAAL), 117 to 137 (ISAP…MGLA), 155 to 175 (VWAT…MIIV), 225 to 245 (YVYI…YFLL), 254 to 274 (FISI…YLLI), 287 to 307 (ATVI…IVLI), 329 to 349 (YLYL…ALSV), 376 to 396 (SIFG…WGLI), 432 to 452 (IVYL…LFNI), 458 to 478 (LVVS…IALS), 491 to 511 (IGMA…PVFF), and 523 to 543 (IYLY…GNWI).

It is found in the cell membrane. This is an uncharacterized protein from Mycoplasmoides gallisepticum (strain R(low / passage 15 / clone 2)) (Mycoplasma gallisepticum).